A 434-amino-acid polypeptide reads, in one-letter code: uncharacterized protein (434 aa).

A TRAM domain is found at 4–62 (LLTIHTQVEGEITALAFGGAGILRYHGFVIFVPFTAPGDQIICRIIEIKKSFAVAELVK). Cysteine 75, cysteine 81, cysteine 84, and cysteine 161 together coordinate [4Fe-4S] cluster. S-adenosyl-L-methionine is bound by residues glutamine 266, tyrosine 295, glutamate 316, and asparagine 364. The active-site Nucleophile is the cysteine 391.

This sequence belongs to the class I-like SAM-binding methyltransferase superfamily. RNA M5U methyltransferase family.

This is an uncharacterized protein from Protochlamydia amoebophila (strain UWE25).